Reading from the N-terminus, the 125-residue chain is Fluoride-specific ion channel FluC (125 aa).

Helical transmembrane passes span 4–24 (LMLVCLGGAIGAGMRHLTVTA), 32–52 (AFPWGTLAVNVAGSFAMGLLV), 67–87 (LLLAPGMLGGFTTFSAFSLDV), and 100–120 (LAYVLASVAGSILALFVGLWL). Na(+) contacts are provided by Gly-75 and Thr-78.

This sequence belongs to the fluoride channel Fluc/FEX (TC 1.A.43) family.

It is found in the cell inner membrane. The enzyme catalyses fluoride(in) = fluoride(out). With respect to regulation, na(+) is not transported, but it plays an essential structural role and its presence is essential for fluoride channel function. Fluoride-specific ion channel. Important for reducing fluoride concentration in the cell, thus reducing its toxicity. This Chelativorans sp. (strain BNC1) protein is Fluoride-specific ion channel FluC.